A 264-amino-acid polypeptide reads, in one-letter code: Undecaprenyl-diphosphatase (264 aa).

Transmembrane regions (helical) follow at residues 7 to 27, 39 to 59, 89 to 109, 112 to 132, 145 to 165, 182 to 202, 212 to 232, and 244 to 264; these read VVILGFIQGIAEFLPISSSGH, LPIVFDIYLHLATVLVVMIYY, ILLILIITIITAFIGIFIEMF, LFTLNLVLINFIVTSILLFLL, ILLAGCLIGTMQGIGAMPGIS, SESFEISFLSLIPIVFGSLLL, MLFSIFEINLGAIIAFLVGLF, and SKLYYFSVYLIILVSLVYFLF.

The protein belongs to the UppP family.

It localises to the cell inner membrane. It carries out the reaction di-trans,octa-cis-undecaprenyl diphosphate + H2O = di-trans,octa-cis-undecaprenyl phosphate + phosphate + H(+). Catalyzes the dephosphorylation of undecaprenyl diphosphate (UPP). Confers resistance to bacitracin. This is Undecaprenyl-diphosphatase from Borrelia hermsii (strain HS1 / DAH).